The sequence spans 272 residues: MENITLDQYLQSAVDVVKEIGPMILKNYNSRSKQIEYKGAIDLVTDTDKAVEEHIIKTLTTKYPHTKILGEESTKDGIYNWGNEPTWVIDPIDGTTNFVHRFPLFCVSIALSINKEIVVACLYAPVLDELFTATKGGGAFLNGESISVSSVEHLSQSIISTNVGYDRSDKGIEFMLTNFKNILKDNVQALRFSGTAAWEMASVSCGRVDSFYEWGIHPWDIAAASLLITEAGGVVVDPSGGKCDMESRKVLCGNPNIVNKLSKLLIEKPTSN.

Glu-71, Asp-90, Ile-92, and Asp-93 together coordinate Mg(2+). Glu-71 is a substrate binding site. Residues 92–95 (IDGT), 194–196 (GTA), Glu-213, and Asp-220 contribute to the substrate site. Asp-220 lines the Mg(2+) pocket.

This sequence belongs to the inositol monophosphatase superfamily. Mg(2+) is required as a cofactor.

It is found in the cytoplasm. It carries out the reaction a myo-inositol phosphate + H2O = myo-inositol + phosphate. The enzyme catalyses alpha-D-galactose 1-phosphate + H2O = D-galactose + phosphate. It functions in the pathway polyol metabolism; myo-inositol biosynthesis; myo-inositol from D-glucose 6-phosphate: step 2/2. With respect to regulation, inhibited by Li(+), Ca(2+) and Mn(2+), but also by Mg(2+) at concentrations above 3 mM. Its function is as follows. Responsible for the provision of inositol required for synthesis of phosphatidylinositol and polyphosphoinositides. Has broad substrate specificity and can use myo-inositol monophosphates, myo-inositol 1,3-diphosphate, myo-inositol 1,4-diphosphate, scyllo-inositol-phosphate, D-galactose 1-phosphate, glucose-1-phosphate, glucose-6-phosphate, fructose-1-phosphate, beta-glycerophosphate, and 2'-AMP as substrates. The chain is Inositol monophosphatase (impa1) from Dictyostelium discoideum (Social amoeba).